Consider the following 167-residue polypeptide: Ureidoglycolate lyase (167 aa).

Belongs to the ureidoglycolate lyase family. As to quaternary structure, homodimer. Ni(2+) serves as cofactor.

It catalyses the reaction (S)-ureidoglycolate = urea + glyoxylate. It participates in nitrogen metabolism; (S)-allantoin degradation. In terms of biological role, catalyzes the catabolism of the allantoin degradation intermediate (S)-ureidoglycolate, generating urea and glyoxylate. Involved in the utilization of allantoin as nitrogen source. The sequence is that of Ureidoglycolate lyase from Pseudomonas putida (strain ATCC 700007 / DSM 6899 / JCM 31910 / BCRC 17059 / LMG 24140 / F1).